Consider the following 147-residue polypeptide: MIIMVIIFLVLLFWENEVNDEAVMSTLEHLHVDYPQNDVPVPARYCNHMIIQRVIREPDHTCKKEHVFIHERPRKINGICISPKKVACQNLSAIFCFQSETKFKMTVCQLIEGTRYPACRYHYSPTEGFVLVTCDDLRPDSFLGYVK.

The first 20 residues, 1–20 (MIIMVIIFLVLLFWENEVND), serve as a signal peptide directing secretion.

Belongs to the pancreatic ribonuclease family.

It localises to the secreted. Functionally, does not exhibit any ribonuclease activity. The polypeptide is Probable inactive ribonuclease-like protein 12 (RNASE12) (Homo sapiens (Human)).